A 526-amino-acid chain; its full sequence is GMP synthase [glutamine-hydrolyzing] (526 aa).

The 199-residue stretch at 9–207 (RILILNFGSQ…VLDICSCQGR (199 aa)) folds into the Glutamine amidotransferase type-1 domain. The active-site Nucleophile is the cysteine 86. Residues histidine 181 and glutamate 183 contribute to the active site. A GMPS ATP-PPase domain is found at 208–401 (WTPNNIKENI…LGLPFHMLYR (194 aa)). Residue 235–241 (SGGVDST) participates in ATP binding.

In terms of assembly, homodimer.

The catalysed reaction is XMP + L-glutamine + ATP + H2O = GMP + L-glutamate + AMP + diphosphate + 2 H(+). Its pathway is purine metabolism; GMP biosynthesis; GMP from XMP (L-Gln route): step 1/1. In terms of biological role, catalyzes the synthesis of GMP from XMP. This is GMP synthase [glutamine-hydrolyzing] from Baumannia cicadellinicola subsp. Homalodisca coagulata.